The primary structure comprises 75 residues: Protein Tlp homolog (75 aa).

Residues 52 to 75 are disordered; it reads RREALDGMREEIKDEARDKKNGYM.

The protein belongs to the Tlp family.

The chain is Protein Tlp homolog from Clostridium botulinum (strain Okra / Type B1).